The sequence spans 224 residues: 4'-phosphopantetheinyl transferase ffp (224 aa).

Residues Asp107, Glu109, and Glu151 each contribute to the Mg(2+) site. The segment at 158–189 (GKGLSLPLDSFSVRLHEDGRVSVELPEHHTPC) is peptidyl carrier protein binding.

This sequence belongs to the P-Pant transferase superfamily. Gsp/Sfp/HetI/AcpT family. The cofactor is Mg(2+).

The catalysed reaction is apo-[peptidyl-carrier protein] + CoA = holo-[peptidyl-carrier protein] + adenosine 3',5'-bisphosphate + H(+). Its function is as follows. May activate the peptidyl carrier protein (PCP) domains of fengycin synthase by transferring the 4'-phosphopantetheinyl moiety of coenzyme A (CoA) to a serine residue. This is 4'-phosphopantetheinyl transferase ffp (ffp) from Bacillus subtilis.